Consider the following 451-residue polypeptide: UDP-N-acetylmuramoylalanine--D-glutamate ligase (451 aa).

119–125 contributes to the ATP binding site; the sequence is GSNGKTT.

Belongs to the MurCDEF family.

Its subcellular location is the cytoplasm. It carries out the reaction UDP-N-acetyl-alpha-D-muramoyl-L-alanine + D-glutamate + ATP = UDP-N-acetyl-alpha-D-muramoyl-L-alanyl-D-glutamate + ADP + phosphate + H(+). Its pathway is cell wall biogenesis; peptidoglycan biosynthesis. Functionally, cell wall formation. Catalyzes the addition of glutamate to the nucleotide precursor UDP-N-acetylmuramoyl-L-alanine (UMA). The protein is UDP-N-acetylmuramoylalanine--D-glutamate ligase of Geobacillus kaustophilus (strain HTA426).